The sequence spans 425 residues: Alpha-muurolene synthase (425 aa).

Residues aspartate 97, aspartate 101, asparagine 240, serine 244, and glutamate 248 each contribute to the Mg(2+) site. Residues aspartate 97–aspartate 101 carry the DDXXD motif motif. The disordered stretch occupies residues valine 348–valine 382. The segment covering alanine 349–glutamine 362 has biased composition (pro residues). Positions alanine 366 to aspartate 377 are enriched in basic and acidic residues.

This sequence belongs to the terpene synthase family. It depends on Mg(2+) as a cofactor.

The enzyme catalyses (2E,6E)-farnesyl diphosphate = alpha-muurolene + diphosphate. It carries out the reaction (2E,6E)-farnesyl diphosphate = gamma-muurolene + diphosphate. The catalysed reaction is (2E,6E)-farnesyl diphosphate = (+)-(R)-germacrene A + diphosphate. In terms of biological role, sesquiterpene synthase that catalyzes the formation of alpha-muurolene, and at lower level (+)-(R)-germacrene A and gamma-muurolene. This chain is Alpha-muurolene synthase (COP3), found in Coprinopsis cinerea (strain Okayama-7 / 130 / ATCC MYA-4618 / FGSC 9003) (Inky cap fungus).